Reading from the N-terminus, the 578-residue chain is Proline--tRNA ligase (578 aa).

The protein belongs to the class-II aminoacyl-tRNA synthetase family. ProS type 1 subfamily. Homodimer.

The protein resides in the cytoplasm. It catalyses the reaction tRNA(Pro) + L-proline + ATP = L-prolyl-tRNA(Pro) + AMP + diphosphate. In terms of biological role, catalyzes the attachment of proline to tRNA(Pro) in a two-step reaction: proline is first activated by ATP to form Pro-AMP and then transferred to the acceptor end of tRNA(Pro). As ProRS can inadvertently accommodate and process non-cognate amino acids such as alanine and cysteine, to avoid such errors it has two additional distinct editing activities against alanine. One activity is designated as 'pretransfer' editing and involves the tRNA(Pro)-independent hydrolysis of activated Ala-AMP. The other activity is designated 'posttransfer' editing and involves deacylation of mischarged Ala-tRNA(Pro). The misacylated Cys-tRNA(Pro) is not edited by ProRS. This Burkholderia thailandensis (strain ATCC 700388 / DSM 13276 / CCUG 48851 / CIP 106301 / E264) protein is Proline--tRNA ligase.